The chain runs to 293 residues: Lipoyl synthase (293 aa).

Residues C47, C52, C58, C73, C77, C80, and S285 each coordinate [4Fe-4S] cluster. The Radical SAM core domain occupies 59–274 (WSEGTATFMI…EKIGLELGFR (216 aa)).

Belongs to the radical SAM superfamily. Lipoyl synthase family. It depends on [4Fe-4S] cluster as a cofactor.

The protein localises to the cytoplasm. The catalysed reaction is [[Fe-S] cluster scaffold protein carrying a second [4Fe-4S](2+) cluster] + N(6)-octanoyl-L-lysyl-[protein] + 2 oxidized [2Fe-2S]-[ferredoxin] + 2 S-adenosyl-L-methionine + 4 H(+) = [[Fe-S] cluster scaffold protein] + N(6)-[(R)-dihydrolipoyl]-L-lysyl-[protein] + 4 Fe(3+) + 2 hydrogen sulfide + 2 5'-deoxyadenosine + 2 L-methionine + 2 reduced [2Fe-2S]-[ferredoxin]. It participates in protein modification; protein lipoylation via endogenous pathway; protein N(6)-(lipoyl)lysine from octanoyl-[acyl-carrier-protein]: step 2/2. Its function is as follows. Catalyzes the radical-mediated insertion of two sulfur atoms into the C-6 and C-8 positions of the octanoyl moiety bound to the lipoyl domains of lipoate-dependent enzymes, thereby converting the octanoylated domains into lipoylated derivatives. The polypeptide is Lipoyl synthase (Christiangramia forsetii (strain DSM 17595 / CGMCC 1.15422 / KT0803) (Gramella forsetii)).